The primary structure comprises 95 residues: Aspartyl/glutamyl-tRNA(Asn/Gln) amidotransferase subunit C (95 aa).

It belongs to the GatC family. In terms of assembly, heterotrimer of A, B and C subunits.

It catalyses the reaction L-glutamyl-tRNA(Gln) + L-glutamine + ATP + H2O = L-glutaminyl-tRNA(Gln) + L-glutamate + ADP + phosphate + H(+). It carries out the reaction L-aspartyl-tRNA(Asn) + L-glutamine + ATP + H2O = L-asparaginyl-tRNA(Asn) + L-glutamate + ADP + phosphate + 2 H(+). In terms of biological role, allows the formation of correctly charged Asn-tRNA(Asn) or Gln-tRNA(Gln) through the transamidation of misacylated Asp-tRNA(Asn) or Glu-tRNA(Gln) in organisms which lack either or both of asparaginyl-tRNA or glutaminyl-tRNA synthetases. The reaction takes place in the presence of glutamine and ATP through an activated phospho-Asp-tRNA(Asn) or phospho-Glu-tRNA(Gln). This chain is Aspartyl/glutamyl-tRNA(Asn/Gln) amidotransferase subunit C, found in Thioalkalivibrio sulfidiphilus (strain HL-EbGR7).